Consider the following 836-residue polypeptide: Granulocyte colony-stimulating factor receptor (836 aa).

An N-terminal signal peptide occupies residues 1-24 (MARLGNCSLTWAALIILLLPGSLE). Residues 25–117 (ECGHISVSAP…SLQILDQVEL (93 aa)) enclose the Ig-like C2-type domain. Over 25–627 (ECGHISVSAP…TLTPEGSELH (603 aa)) the chain is Extracellular. 2 cysteine pairs are disulfide-bonded: C26-C52 and C46-C101. N-linked (GlcNAc...) asparagine glycosylation is found at N51, N93, N128, and N134. 5 Fibronectin type-III domains span residues 125–230 (IPHN…LEPP), 233–332 (RTMD…TTER), 334–430 (PTVR…SRGP), 431–528 (ALTR…MAPS), and 530–623 (APEL…TPEG). Intrachain disulfides connect C131–C142, C167–C218, C177–C186, C248–C295, and C266–C309. The WSXWS motif motif lies at 318-322 (WSDWS). N-linked (GlcNAc...) asparagine glycans are attached at residues N389, N474, N579, and N610. The chain crosses the membrane as a helical span at residues 628–650 (IILGLFGLLLLLTCLCGTAWLCC). At 651-836 (SPNRKNPLWP…VHGMEALGSF (186 aa)) the chain is on the cytoplasmic side. The Box 1 motif signature appears at 658–666 (LWPSVPDPA).

Belongs to the type I cytokine receptor family. Type 2 subfamily. As to quaternary structure, homodimer. The dimeric receptor binds two CSF3 molecules. Interacts with CEACAM1; down-regulates the CSF3R-STAT3 pathway through recruitment of PTPN6 that dephosphorylates CSF3R. Post-translationally, N-glycosylated. In terms of tissue distribution, one or several isoforms have been found in myelogenous leukemia cell line KG-1, leukemia U-937 cell line, in bone marrow cells, placenta, and peripheral blood granulocytes. Isoform GCSFR-2 is found only in leukemia U-937 cells. Isoform GCSFR-3 is highly expressed in placenta.

The protein localises to the secreted. It is found in the cell membrane. Receptor for granulocyte colony-stimulating factor (CSF3), essential for granulocytic maturation. Plays a crucial role in the proliferation, differentiation and survival of cells along the neutrophilic lineage. In addition it may function in some adhesion or recognition events at the cell surface. The polypeptide is Granulocyte colony-stimulating factor receptor (CSF3R) (Homo sapiens (Human)).